We begin with the raw amino-acid sequence, 169 residues long: Aspartic protease inhibitor 3 (169 aa).

Residue N1 is glycosylated (N-linked (GlcNAc...) asparagine). 2 cysteine pairs are disulfide-bonded: C30/C75 and C124/C134.

This sequence belongs to the protease inhibitor I3 (leguminous Kunitz-type inhibitor) family.

It localises to the vacuole. In terms of biological role, inhibitor of cathepsin D (aspartic protease). May also inhibit trypsin and chymotrypsin (serine proteases). Protects the plant by inhibiting proteases of invading organisms. The chain is Aspartic protease inhibitor 3 from Solanum tuberosum (Potato).